A 37-amino-acid polypeptide reads, in one-letter code: Photosystem II reaction center protein L (37 aa).

The Cytoplasmic portion of the chain corresponds to 1–13; the sequence is MEPNPNRQPVELN. Residues 14–35 traverse the membrane as a helical segment; the sequence is RTSLYLGLLLILVLALLFSSYF. The Lumenal segment spans residues 36–37; sequence FN.

As to quaternary structure, PSII is composed of 1 copy each of membrane proteins PsbA, PsbB, PsbC, PsbD, PsbE, PsbF, PsbH, PsbI, PsbJ, PsbK, PsbL, PsbM, PsbT, PsbX, PsbY, PsbZ, Psb30/Ycf12, peripheral proteins PsbO, CyanoQ (PsbQ), PsbU, PsbV and a large number of cofactors. It forms dimeric complexes. Part of a photosystem II (PSII) assembly intermediate complex PSII-I; crystallized from a strain deleted of psbJ, it forms monomeric PSII before addition of the oxygen evolving complex. PSII-I includes 3 assembly factors not found in mature PSII (Psb27, Psb28 and Psb34). It depends on PSII binds multiple chlorophylls, carotenoids and specific lipids. as a cofactor.

Its subcellular location is the cellular thylakoid membrane. Its function is as follows. One of the components of the core complex of photosystem II (PSII). PSII is a light-driven water:plastoquinone oxidoreductase that uses light energy to abstract electrons from H(2)O, generating O(2) and a proton gradient subsequently used for ATP formation. It consists of a core antenna complex that captures photons, and an electron transfer chain that converts photonic excitation into a charge separation. This subunit is found at the monomer-monomer interface and is required for correct PSII assembly and/or dimerization. This subunit may make specific contacts with lipid(s). This chain is Photosystem II reaction center protein L, found in Thermosynechococcus vestitus (strain NIES-2133 / IAM M-273 / BP-1).